A 382-amino-acid polypeptide reads, in one-letter code: Beta-1,4-galactosyltransferase 6 (382 aa).

The Cytoplasmic segment spans residues 1–14; the sequence is MSVLRRMMRVSNRS. A helical; Signal-anchor for type II membrane protein transmembrane segment spans residues 15 to 35; that stretch reads LLAFIFFFSLSSSCLYFIYVA. The Lumenal portion of the chain corresponds to 36–382; that stretch reads PGIANTYLFM…MPELAPIEDY (347 aa). N-linked (GlcNAc...) asparagine glycans are attached at residues asparagine 71, asparagine 75, asparagine 83, asparagine 84, asparagine 99, and asparagine 122. Cysteine 108 and cysteine 152 are disulfide-bonded. Residues 163–167, 202–204, 229–230, tyrosine 258, and tryptophan 290 contribute to the UDP-alpha-D-galactose site; these read PFRNR, FNR, and VD. A disulfide bond links cysteine 223 and cysteine 242. Mn(2+) is bound at residue aspartate 230. 292–295 contributes to the N-acetyl-D-glucosamine binding site; sequence GEDD. N-linked (GlcNAc...) asparagine glycosylation is present at asparagine 307. Histidine 323 contributes to the Mn(2+) binding site. 323–324 lines the UDP-alpha-D-galactose pocket; that stretch reads HH. Arginine 334 serves as a coordination point for N-acetyl-D-glucosamine. A glycan (N-linked (GlcNAc...) asparagine) is linked at asparagine 367.

It belongs to the glycosyltransferase 7 family. Mn(2+) serves as cofactor. Mg(2+) is required as a cofactor. As to expression, high expression in brain and adrenal gland, lower in liver, lung, colon and peripheral white blood cells.

It localises to the golgi apparatus. The protein localises to the golgi stack membrane. It catalyses the reaction a beta-D-glucosyl-(1&lt;-&gt;1')-N-acylsphing-4-enine + UDP-alpha-D-galactose = a beta-D-Gal-(1-&gt;4)-beta-D-Glc-(1&lt;-&gt;1)-Cer(d18:1(4E)) + UDP + H(+). The protein operates within protein modification; protein glycosylation. It participates in sphingolipid metabolism. Inhibited by EDTA. In terms of biological role, catalyzes the synthesis of lactosylceramide (LacCer) via the transfer of galactose from UDP-galactose to glucosylceramide (GlcCer). LacCer is the starting point in the biosynthesis of all gangliosides (membrane-bound glycosphingolipids) which play pivotal roles in the CNS including neuronal maturation and axonal and myelin formation. In Homo sapiens (Human), this protein is Beta-1,4-galactosyltransferase 6.